The primary structure comprises 288 residues: 4-hydroxy-tetrahydrodipicolinate synthase (288 aa).

Thr43 is a binding site for pyruvate. Tyr131 serves as the catalytic Proton donor/acceptor. Lys160 (schiff-base intermediate with substrate) is an active-site residue. Residue Ile200 coordinates pyruvate.

It belongs to the DapA family. In terms of assembly, homotetramer; dimer of dimers.

The protein resides in the cytoplasm. It carries out the reaction L-aspartate 4-semialdehyde + pyruvate = (2S,4S)-4-hydroxy-2,3,4,5-tetrahydrodipicolinate + H2O + H(+). It functions in the pathway amino-acid biosynthesis; L-lysine biosynthesis via DAP pathway; (S)-tetrahydrodipicolinate from L-aspartate: step 3/4. In terms of biological role, catalyzes the condensation of (S)-aspartate-beta-semialdehyde [(S)-ASA] and pyruvate to 4-hydroxy-tetrahydrodipicolinate (HTPA). This is 4-hydroxy-tetrahydrodipicolinate synthase from Methanococcus aeolicus (strain ATCC BAA-1280 / DSM 17508 / OCM 812 / Nankai-3).